A 359-amino-acid polypeptide reads, in one-letter code: Uroporphyrinogen decarboxylase (359 aa).

Residues 36–40 (RQAGR), aspartate 85, tyrosine 160, serine 215, and histidine 338 contribute to the substrate site.

Belongs to the uroporphyrinogen decarboxylase family. Homodimer.

The protein localises to the cytoplasm. The enzyme catalyses uroporphyrinogen III + 4 H(+) = coproporphyrinogen III + 4 CO2. It participates in porphyrin-containing compound metabolism; protoporphyrin-IX biosynthesis; coproporphyrinogen-III from 5-aminolevulinate: step 4/4. Catalyzes the decarboxylation of four acetate groups of uroporphyrinogen-III to yield coproporphyrinogen-III. The chain is Uroporphyrinogen decarboxylase from Corynebacterium efficiens (strain DSM 44549 / YS-314 / AJ 12310 / JCM 11189 / NBRC 100395).